Consider the following 697-residue polypeptide: Elongation factor G 2 (697 aa).

In terms of domain architecture, tr-type G spans 5–280 (SKYRNIGIFA…AVVDYLPAPD (276 aa)). GTP contacts are provided by residues 14-21 (AHVDAGKT), 78-82 (DTPGH), and 132-135 (NKLD).

This sequence belongs to the TRAFAC class translation factor GTPase superfamily. Classic translation factor GTPase family. EF-G/EF-2 subfamily.

It is found in the cytoplasm. In terms of biological role, catalyzes the GTP-dependent ribosomal translocation step during translation elongation. During this step, the ribosome changes from the pre-translocational (PRE) to the post-translocational (POST) state as the newly formed A-site-bound peptidyl-tRNA and P-site-bound deacylated tRNA move to the P and E sites, respectively. Catalyzes the coordinated movement of the two tRNA molecules, the mRNA and conformational changes in the ribosome. The sequence is that of Elongation factor G 2 from Shewanella denitrificans (strain OS217 / ATCC BAA-1090 / DSM 15013).